We begin with the raw amino-acid sequence, 345 residues long: Anthranilate phosphoribosyltransferase (345 aa).

5-phospho-alpha-D-ribose 1-diphosphate is bound by residues Gly79, 82–83 (GD), Thr87, 89–92 (NVST), 106–114 (KHGNRAVSG), and Ser118. An anthranilate-binding site is contributed by Gly79. Ser91 serves as a coordination point for Mg(2+). Asn109 is an anthranilate binding site. Anthranilate is bound at residue Arg164. Positions 223 and 224 each coordinate Mg(2+).

This sequence belongs to the anthranilate phosphoribosyltransferase family. In terms of assembly, homodimer. Requires Mg(2+) as cofactor.

It catalyses the reaction N-(5-phospho-beta-D-ribosyl)anthranilate + diphosphate = 5-phospho-alpha-D-ribose 1-diphosphate + anthranilate. It participates in amino-acid biosynthesis; L-tryptophan biosynthesis; L-tryptophan from chorismate: step 2/5. In terms of biological role, catalyzes the transfer of the phosphoribosyl group of 5-phosphorylribose-1-pyrophosphate (PRPP) to anthranilate to yield N-(5'-phosphoribosyl)-anthranilate (PRA). This is Anthranilate phosphoribosyltransferase from Saccharolobus islandicus (strain L.S.2.15 / Lassen #1) (Sulfolobus islandicus).